A 341-amino-acid polypeptide reads, in one-letter code: MKRSYSLAELARYLDAELKGDPDYEIRALATLQSASAHQLGFIANPVYQKYLATTQAGALLLRPDFSEYYSGHQLLVANPYQAYAHVSALFDPSVEFSPGIHPTAVIGDGCHLGHGVSIAAHVVLGANVSLGDGAALGPGTVIGDDCHIGARTRLAANVTLYQGVSLGDDCILHAGCVLGADGFGFAPSAGGWIKIHQLGSVVVGNRVEIGASTCIDRGALDDTRIEDGVIIDNLVQIAHNVRIGKNTAIAGHTAIAGSTQIGANCTIAGAVGIVGHLHITDGVHITAMTLVTHSIDKPGSYSSGTPMSQTREWRKNAARFRQLDGLANRLIKIERDQSAE.

The active-site Proton acceptor is His-240.

It belongs to the transferase hexapeptide repeat family. LpxD subfamily. In terms of assembly, homotrimer.

It carries out the reaction a UDP-3-O-[(3R)-3-hydroxyacyl]-alpha-D-glucosamine + a (3R)-hydroxyacyl-[ACP] = a UDP-2-N,3-O-bis[(3R)-3-hydroxyacyl]-alpha-D-glucosamine + holo-[ACP] + H(+). The protein operates within bacterial outer membrane biogenesis; LPS lipid A biosynthesis. Catalyzes the N-acylation of UDP-3-O-acylglucosamine using 3-hydroxyacyl-ACP as the acyl donor. Is involved in the biosynthesis of lipid A, a phosphorylated glycolipid that anchors the lipopolysaccharide to the outer membrane of the cell. This is UDP-3-O-acylglucosamine N-acyltransferase from Cellvibrio japonicus (strain Ueda107) (Pseudomonas fluorescens subsp. cellulosa).